A 99-amino-acid polypeptide reads, in one-letter code: MAHKKGGGSTRNGRDSRAKRLGVKRYDGQFVPAGSVLVRQRGTVFRPGRNVGMGRDYTLFALIDGYVKFEPISRDKRRVSVYPEPVGRTLPAPAGSATA.

Positions 1 to 21 are disordered; that stretch reads MAHKKGGGSTRNGRDSRAKRL.

It belongs to the bacterial ribosomal protein bL27 family.

The chain is Large ribosomal subunit protein bL27 from Thermomicrobium roseum (strain ATCC 27502 / DSM 5159 / P-2).